Here is a 273-residue protein sequence, read N- to C-terminus: Embryonic polyadenylate-binding protein 2 (273 aa).

Positions 22–57 (SSDPEAQGWGAWGRTEKTSLVPRAGSRAGSDKEAEE) are disordered. The RRM domain occupies 143–220 (RSVFVGNVDY…RVIKVLPKRT (78 aa)).

The protein localises to the cytoplasm. Its function is as follows. Binds the poly(A) tail of mRNA. The protein is Embryonic polyadenylate-binding protein 2 (Pabpn1l) of Mus musculus (Mouse).